A 483-amino-acid chain; its full sequence is Cobyric acid synthase (483 aa).

The GATase cobBQ-type domain maps to 252–439 (KLKVVVPVLT…LHGFLDSEAV (188 aa)). Cys-333 functions as the Nucleophile in the catalytic mechanism. His-431 is an active-site residue.

It belongs to the CobB/CobQ family. CobQ subfamily.

It functions in the pathway cofactor biosynthesis; adenosylcobalamin biosynthesis. Functionally, catalyzes amidations at positions B, D, E, and G on adenosylcobyrinic A,C-diamide. NH(2) groups are provided by glutamine, and one molecule of ATP is hydrogenolyzed for each amidation. The polypeptide is Cobyric acid synthase (Vibrio vulnificus (strain CMCP6)).